The sequence spans 32 residues: Glutathione S-transferase 8.2 (32 aa).

Residue 21-22 coordinates glutathione; sequence QS.

It belongs to the GST superfamily. Alpha family. As to quaternary structure, homodimer. In terms of processing, the N-terminus is blocked.

Its subcellular location is the cytoplasm. The catalysed reaction is RX + glutathione = an S-substituted glutathione + a halide anion + H(+). Functionally, conjugation of reduced glutathione to a wide number of exogenous and endogenous hydrophobic electrophiles. This is Glutathione S-transferase 8.2 from Dicentrarchus labrax (European seabass).